Consider the following 310-residue polypeptide: Transcription factor UNE12 (310 aa).

2 disordered regions span residues 124–156 and 229–253; these read HGQP…ATDP and SSSV…WSND. One can recognise a bHLH domain in the interval 152–201; sequence QATDPHSIAERLRRERIAERIRALQELVPTVNKTDRAAMIDEIVDYVKFL.

In terms of assembly, homodimer. In terms of tissue distribution, expressed constitutively in roots, leaves, stems, and flowers.

The protein resides in the nucleus. In terms of biological role, required for ovule fertilization. The protein is Transcription factor UNE12 (UNE12) of Arabidopsis thaliana (Mouse-ear cress).